The primary structure comprises 222 residues: Hexitol phosphatase B (222 aa).

The Nucleophile role is filled by D13. The a divalent metal cation site is built by D13 and D15. Residues D13–D15, S115–A116, and K148 each bind substrate. Catalysis depends on D15, which acts as the Proton donor. D173 provides a ligand contact to a divalent metal cation.

This sequence belongs to the HAD-like hydrolase superfamily. CbbY/CbbZ/Gph/YieH family. It depends on Mg(2+) as a cofactor. Requires Mn(2+) as cofactor. Co(2+) serves as cofactor. Zn(2+) is required as a cofactor.

It catalyses the reaction sugar phosphate + H2O = sugar + phosphate.. The enzyme catalyses 2-deoxy-D-glucose 6-phosphate + H2O = 2-deoxy-D-glucose + phosphate. The catalysed reaction is D-mannitol 1-phosphate + H2O = D-mannitol + phosphate. It carries out the reaction D-sorbitol 6-phosphate + H2O = D-sorbitol + phosphate. Its function is as follows. Sugar-phosphate phosphohydrolase that catalyzes the dephosphorylation of D-mannitol 1-phosphate and D-sorbitol 6-phosphate. Also catalyzes the dephosphorylation of 2-deoxyglucose 6-phosphate (2dGlu6P); this is a biologically important activity in vivo since it contributes to the elimination of this toxic compound and plays an important role in the resistance of E.coli to 2-deoxyglucose. The sequence is that of Hexitol phosphatase B from Escherichia coli O157:H7.